The chain runs to 682 residues: MSRKQLALFEPTLVVQALKEAVKKLNPQAQWRNPVMFIVWIGSLLTTCISIAMASGVMPGNALFSAAISGWLWVTVLFANFAEALAEGRSKAQANSLKGVKKTAFARKLREPKYGAAADKVPADQLRKGDIVLVEAGDIIPCDGEVIEGGASVDESAITGESAPVIRESGGDFASVTGGTRILSDWLVIECSVNPGETFLDRMIAMVEGAQRRKTPNEIALTILLIALTIVFLLATATLWPFSAWGGNAVSVTVLVALLVCLIPTTIGGLLSAIGVAGMSRMLGANVIATSGRAVEAAGDVDVLLLDKTGTITLGNRQASEFIPAQGVEEKALADAAQLASLADETPEGRSIVILAKQRFNLRERDVQSLHATFVPFTAQSRMSGINIDNRMIRKGSVDAIRRHVEANGGHFPADVDQKVDQVARQGATPLVVVEGSRVLGVIALKDIVKGGIKERFAQLRKMGIKTVMITGDNRLTAAAIAAEAGVDDFLAEATPEAKLALIRQYQAEGRLVAMTGDGTNDAPALAQADVAVAMNSGTQAAKEAGNMVDLDSNPTKLIEVVHIGKQMLMTRGSLTTFSIANDVAKYFAIIPAAFAATYPQLNALNIMRLHSPDSAILSAVIFNALIIVFLIPLALKGVSYKPLTASAMLRRNLWIYGLGGLLVPFIGIKVIDLLLTICGLV.

4 helical membrane-spanning segments follow: residues 34-54 (PVMF…IAMA), 62-82 (ALFS…ANFA), 219-239 (IALT…TATL), and 254-274 (VLVA…LSAI). Aspartate 307 acts as the 4-aspartylphosphate intermediate in catalysis. ATP contacts are provided by residues aspartate 344, glutamate 348, 377–384 (FTAQSRMS), and lysine 395. 2 residues coordinate Mg(2+): aspartate 518 and aspartate 522. The next 3 helical transmembrane spans lie at 588 to 608 (FAII…LNIM), 616 to 636 (AILS…PLAL), and 662 to 682 (LLVP…CGLV).

Belongs to the cation transport ATPase (P-type) (TC 3.A.3) family. Type IA subfamily. As to quaternary structure, the system is composed of three essential subunits: KdpA, KdpB and KdpC.

It is found in the cell inner membrane. The catalysed reaction is K(+)(out) + ATP + H2O = K(+)(in) + ADP + phosphate + H(+). Its function is as follows. Part of the high-affinity ATP-driven potassium transport (or Kdp) system, which catalyzes the hydrolysis of ATP coupled with the electrogenic transport of potassium into the cytoplasm. This subunit is responsible for energy coupling to the transport system and for the release of the potassium ions to the cytoplasm. In Escherichia coli O81 (strain ED1a), this protein is Potassium-transporting ATPase ATP-binding subunit.